We begin with the raw amino-acid sequence, 433 residues long: ATP-dependent protease ATPase subunit HslU (433 aa).

Residues Val-18, 60–65, Asp-246, Glu-311, and Arg-383 contribute to the ATP site; that span reads GVGKTE.

This sequence belongs to the ClpX chaperone family. HslU subfamily. As to quaternary structure, a double ring-shaped homohexamer of HslV is capped on each side by a ring-shaped HslU homohexamer. The assembly of the HslU/HslV complex is dependent on binding of ATP.

Its subcellular location is the cytoplasm. ATPase subunit of a proteasome-like degradation complex; this subunit has chaperone activity. The binding of ATP and its subsequent hydrolysis by HslU are essential for unfolding of protein substrates subsequently hydrolyzed by HslV. HslU recognizes the N-terminal part of its protein substrates and unfolds these before they are guided to HslV for hydrolysis. The chain is ATP-dependent protease ATPase subunit HslU from Rhodopseudomonas palustris (strain BisB5).